We begin with the raw amino-acid sequence, 131 residues long: Neo-calmodulin (131 aa).

EF-hand domains follow at residues 1–32, 33–68, 70–105, and 106–131; these read EFKE…LGQN, PTEA…KMKD, DSEE…LGEK, and LTDE…YEEF. The Ca(2+) site is built by D10, D12, D14, T16, E21, D46, D48, N50, T52, E57, D83, D85, N87, Y89, E94, D119, D121, D123, Q125, and E130.

It belongs to the calmodulin family.

This is Neo-calmodulin from Gallus gallus (Chicken).